A 633-amino-acid polypeptide reads, in one-letter code: Probable potassium transport system protein Kup (633 aa).

Transmembrane regions (helical) follow at residues 21–41, 61–81, 107–127, 145–165, 176–196, 219–239, 255–275, 293–313, 345–365, 371–391, 402–422, and 427–447; these read LAVG…LYAF, LVSL…VLFL, TAVL…DAMI, PTLS…LFAI, FFGP…IMHI, GFLG…AEAL, WFVL…ALVL, ALLP…QAVI, IFLP…VLSF, LATA…IMAF, LPMA…FLGA, and IHDG…IMWT.

The protein belongs to the HAK/KUP transporter (TC 2.A.72) family.

Its subcellular location is the cell inner membrane. It carries out the reaction K(+)(in) + H(+)(in) = K(+)(out) + H(+)(out). In terms of biological role, transport of potassium into the cell. Likely operates as a K(+):H(+) symporter. This is Probable potassium transport system protein Kup from Rhizobium rhizogenes (strain K84 / ATCC BAA-868) (Agrobacterium radiobacter).